We begin with the raw amino-acid sequence, 109 residues long: Nucleoid-associated protein Spea_1509 (109 aa).

Residues 87 to 109 form a disordered region; sequence NQKEKMAEVTGGMQLPPGMKMPF.

It belongs to the YbaB/EbfC family. Homodimer.

The protein localises to the cytoplasm. It localises to the nucleoid. Binds to DNA and alters its conformation. May be involved in regulation of gene expression, nucleoid organization and DNA protection. The polypeptide is Nucleoid-associated protein Spea_1509 (Shewanella pealeana (strain ATCC 700345 / ANG-SQ1)).